A 309-amino-acid chain; its full sequence is MITIIGSGRVGTAAAVIMGLLKIDTKILLIDIIKGLPQGEALDMNHMSSILGLDVEYFGSNEYKDMEGSDLVIVTAGLPRKPGMTREQLLEANAKIVSEIGKEIKRYAPNSVVILTTNPLDAMTYVMWKSTGFPRERVIGFSGVLDAGRLAYYAAKKLGVSPASILPIVLGQHGESMFPVPSKSFIHGVPLSRLLTEEQLKEVVEETVKAGARITELRGFSSNWGPGAGLALMAEAVKRDTKRSLIASVVLQGEYDVRDVPVEVPVILGRSGVLKVLEIELSAEERQKFMQSVEAIRKLIASIPSNYLQ.

Residues 6-11 (GSGRVG) and Asp31 contribute to the NAD(+) site. Substrate is bound by residues Arg80 and Arg86. NAD(+) contacts are provided by residues Asn93 and 116–118 (TTN). Positions 118 and 149 each coordinate substrate. His173 acts as the Proton acceptor in catalysis.

The protein belongs to the LDH/MDH superfamily. As to quaternary structure, homotetramer.

It catalyses the reaction (S)-malate + NAD(+) = oxaloacetate + NADH + H(+). Catalyzes the reversible oxidation of malate to oxaloacetate. Exhibits higher specific activity for oxaloacetate reduction than for malate oxidation in vitro. Has a strong preference for NAD. Can use NADPH for oxaloacetate reduction, but activity decreases more than 90%. No activity detected with NADP(+) and malate. This chain is Malate dehydrogenase, found in Pyrobaculum islandicum (strain DSM 4184 / JCM 9189 / GEO3).